A 318-amino-acid polypeptide reads, in one-letter code: Oxygen-evolving enhancer protein 1, chloroplastic (318 aa).

A signal peptide spans M1–A18. A helical transmembrane segment spans residues A45–I65.

This sequence belongs to the PsbO family.

The protein localises to the plastid. Its subcellular location is the chloroplast thylakoid membrane. Its function is as follows. Stabilizes the manganese cluster which is the primary site of water splitting. In Chattonella marina var. antiqua (Red tide flagellate), this protein is Oxygen-evolving enhancer protein 1, chloroplastic.